Reading from the N-terminus, the 481-residue chain is ATP synthase subunit beta, plastid (481 aa).

162–169 (GGAGVGKT) serves as a coordination point for ATP.

It belongs to the ATPase alpha/beta chains family. As to quaternary structure, F-type ATPases have 2 components, CF(1) - the catalytic core - and CF(0) - the membrane proton channel. CF(1) has five subunits: alpha(3), beta(3), gamma(1), delta(1), epsilon(1). CF(0) has four main subunits: a(1), b(1), b'(1) and c(9-12).

The protein localises to the plastid membrane. It carries out the reaction ATP + H2O + 4 H(+)(in) = ADP + phosphate + 5 H(+)(out). In terms of biological role, produces ATP from ADP in the presence of a proton gradient across the membrane. The catalytic sites are hosted primarily by the beta subunits. The chain is ATP synthase subunit beta, plastid (atpB) from Prototheca wickerhamii.